A 272-amino-acid polypeptide reads, in one-letter code: Glutamate 5-kinase (272 aa).

An ATP-binding site is contributed by Lys15. Substrate-binding residues include Ser55, Asp142, and Asn158. ATP is bound by residues 178–179 and 220–226; these read SD and TGGMLSK.

Belongs to the glutamate 5-kinase family.

The protein resides in the cytoplasm. The catalysed reaction is L-glutamate + ATP = L-glutamyl 5-phosphate + ADP. It functions in the pathway amino-acid biosynthesis; L-proline biosynthesis; L-glutamate 5-semialdehyde from L-glutamate: step 1/2. In terms of biological role, catalyzes the transfer of a phosphate group to glutamate to form L-glutamate 5-phosphate. This chain is Glutamate 5-kinase, found in Streptococcus equi subsp. zooepidemicus (strain H70).